A 411-amino-acid chain; its full sequence is Corticotropin-releasing factor receptor 2 (411 aa).

Residues 1–19 constitute a signal peptide (not cleaved); the sequence is MDAALLLSLLEANCSLALA. The Extracellular portion of the chain corresponds to 1-108; that stretch reads MDAALLLSLL…EPILDDKQRK (108 aa). Asn13, Asn41, Asn74, Asn86, and Asn94 each carry an N-linked (GlcNAc...) asparagine glycan. Disulfide bonds link Cys14/Cys50, Cys40/Cys83, and Cys64/Cys98. Residues 109–139 form a helical membrane-spanning segment; the sequence is YDLHYRIALIINYLGHCVSVVALVAAFLLFL. Topologically, residues 140–146 are cytoplasmic; it reads VLRSIRC. A helical membrane pass occupies residues 147–171; it reads LRNVIHWNLITTFILRNITWFLLQL. Residues 172–185 lie on the Extracellular side of the membrane; sequence IDHEVHEGNEVWCR. Cys184 and Cys254 form a disulfide bridge. Residues 186-214 traverse the membrane as a helical segment; it reads CVTTIFNYFVVTNFFWMFVEGCYLHTAIV. Topologically, residues 215-221 are cytoplasmic; that stretch reads MTYSTEH. Residues 222–249 traverse the membrane as a helical segment; the sequence is LRKWLFLFIGWCIPCPIIVAWAVGKLYY. The Extracellular segment spans residues 250–265; sequence ENEQCWFGKEPGDLVD. The helical transmembrane segment at 266 to 291 threads the bilayer; that stretch reads YIYQGPIILVLLINFVFLFNIVRILM. Over 292-302 the chain is Cytoplasmic; the sequence is TKLRASTTSET. The chain crosses the membrane as a helical span at residues 303-327; that stretch reads IQYRKAVKATLVLLPLLGITYMLFF. Over 328–334 the chain is Extracellular; that stretch reads VNPGEDD. Residues 335–364 traverse the membrane as a helical segment; it reads LSQIVFIYFNSFLQSFQGFFVSVFYCFFNG. The Cytoplasmic segment spans residues 365–411; that stretch reads EVRSALRKRWHRWQDHHALRVPVARAMSIPTSPTRISFHSIKQTAAV.

Belongs to the G-protein coupled receptor 2 family. In terms of assembly, monomer. Interacts (via N-terminal extracellular domain) with CRF, UCN, UCN2 and UCN3. An N-glycosylation site within the signal peptide impedes its proper cleavage and function. As to expression, predominantly expressed in limbic regions of the brain such as the lateral septum, the entorhinal cortex, the hypothalamic ventromedial nucleus and several amygdaloid nuclei. Also detectable in lung, kidney and heart.

It localises to the cell membrane. G-protein coupled receptor for CRH (corticotropin-releasing factor), UCN (urocortin), UCN2 and UCN3. Has high affinity for UCN. Ligand binding causes a conformation change that triggers signaling via guanine nucleotide-binding proteins (G proteins) and down-stream effectors, such as adenylate cyclase. Promotes the activation of adenylate cyclase, leading to increased intracellular cAMP levels. In Rattus norvegicus (Rat), this protein is Corticotropin-releasing factor receptor 2 (Crhr2).